Consider the following 471-residue polypeptide: 7-dehydrocholesterol reductase (471 aa).

The next 8 membrane-spanning stretches (helical) occupy residues 36-56, 95-115, 144-164, 173-193, 233-253, 262-282, 302-322, and 327-347; these read LVSV…FIMA, LYAL…DFCH, LQAW…LSWF, WIPL…FAMI, LFFN…SFAA, VTNS…DFFW, LGWG…LYLV, and QLST…YYIF. Residues Lys354, Arg358, Leu391, Trp396, and 403-404 contribute to the NADP(+) site; that span reads NY. A helical transmembrane segment spans residues 416–436; the sequence is LACGGGHLLPYFYIIYMTILL. Residues Asp443, 447 to 451, and Tyr458 contribute to the NADP(+) site; that span reads CANKY.

It belongs to the ERG4/ERG24 family. As to quaternary structure, interacts with DHCR24; this interaction regulates DHCR7 activity. Interacts with TMEM147. In terms of tissue distribution, highest expression is detected in liver, followed by kidney and brain.

Its subcellular location is the endoplasmic reticulum membrane. The enzyme catalyses cholesterol + NADP(+) = 7-dehydrocholesterol + NADPH + H(+). It catalyses the reaction 7-dehydrodesmosterol + NADPH + H(+) = desmosterol + NADP(+). It carries out the reaction 5,6alpha-epoxy-5alpha-cholestan-3beta-ol + H2O = 5alpha-cholestane-3beta,5,6beta-triol. The catalysed reaction is 5,6beta-epoxy-5beta-cholestan-3beta-ol + H2O = 5alpha-cholestane-3beta,5,6beta-triol. It functions in the pathway steroid biosynthesis; cholesterol biosynthesis. Functionally, oxidoreductase that catalyzes the last step of the cholesterol synthesis pathway, which transforms cholesta-5,7-dien-3beta-ol (7-dehydrocholesterol,7-DHC) into cholesterol by reducing the C7-C8 double bond of its sterol core. Can also metabolize cholesta-5,7,24-trien-3beta-ol (7-dehydrodemosterol, 7-DHD) to desmosterol, which is then metabolized by the Delta(24)-sterol reductase (DHCR24) to cholesterol. Modulates ferroptosis (a form of regulated cell death driven by iron-dependent lipid peroxidation) through the metabolic breakdown of the anti-ferroptotic metabolites 7-DHC and 7-DHD which, when accumulated, divert the propagation of peroxyl radical-mediated damage from phospholipid components to its sterol core, protecting plasma and mitochondrial membranes from phospholipid autoxidation. In terms of biological role, component of the microsomal antiestrogen binding site (AEBS), a multiproteic complex at the ER membrane that consists of an association between cholestenol Delta-isomerase/EBP and DHCR7. This complex is responsible for cholesterol-5,6-epoxide hydrolase (ChEH) activity, which consists in the hydration of cholesterol-5,6-epoxides (5,6-EC) into cholestane-3beta,5alpha,6beta-triol (CT). The precise role of each component of this complex has not been described yet. This Rattus norvegicus (Rat) protein is 7-dehydrocholesterol reductase (Dhcr7).